The chain runs to 64 residues: Large ribosomal subunit protein uL29 (64 aa).

This sequence belongs to the universal ribosomal protein uL29 family.

This Lacticaseibacillus paracasei (strain ATCC 334 / BCRC 17002 / CCUG 31169 / CIP 107868 / KCTC 3260 / NRRL B-441) (Lactobacillus paracasei) protein is Large ribosomal subunit protein uL29.